Consider the following 67-residue polypeptide: Large ribosomal subunit protein bL31 (67 aa).

4 residues coordinate Zn(2+): cysteine 16, cysteine 18, cysteine 36, and cysteine 39.

It belongs to the bacterial ribosomal protein bL31 family. Type A subfamily. In terms of assembly, part of the 50S ribosomal subunit. The cofactor is Zn(2+).

In terms of biological role, binds the 23S rRNA. This Treponema pallidum (strain Nichols) protein is Large ribosomal subunit protein bL31.